A 223-amino-acid chain; its full sequence is N-acetylmuramate alpha-1-phosphate uridylyltransferase (223 aa).

Residues 11–13 and K23 contribute to the UTP site; that span reads GER. Substrate is bound at residue N105. Mg(2+) is bound at residue D107. The substrate site is built by D140 and D205. A Mg(2+)-binding site is contributed by D205.

The protein belongs to the nucleotidyltransferase MurU family. As to quaternary structure, monomer. Mg(2+) is required as a cofactor.

The catalysed reaction is N-acetyl-alpha-D-muramate 1-phosphate + UDP + H(+) = UDP-N-acetyl-alpha-D-muramate + phosphate. The protein operates within cell wall biogenesis; peptidoglycan recycling. Is completely inhibited by EDTA in vitro. Catalyzes the formation of UDP-N-acetylmuramate (UDP-MurNAc), a crucial precursor of the bacterial peptidoglycan cell wall, from UTP and MurNAc-alpha-1P. Is involved in peptidoglycan recycling as part of a cell wall recycling pathway that bypasses de novo biosynthesis of the peptidoglycan precursor UDP-MurNAc. Plays a role in intrinsic resistance to fosfomycin, which targets the de novo synthesis of UDP-MurNAc. Is not able to use GlcNAc-alpha-1P and GalNAc-alpha-1P as substrates. Cannot accept other nucleotide triphosphates (ATP, CTP, TTP, or GTP) than UTP. This Pseudomonas putida (strain ATCC 47054 / DSM 6125 / CFBP 8728 / NCIMB 11950 / KT2440) protein is N-acetylmuramate alpha-1-phosphate uridylyltransferase.